The primary structure comprises 387 residues: 4-hydroxy-3-methylbut-2-en-1-yl diphosphate synthase (flavodoxin) (387 aa).

Cys-280, Cys-283, Cys-315, and Glu-322 together coordinate [4Fe-4S] cluster.

The protein belongs to the IspG family. Requires [4Fe-4S] cluster as cofactor.

The catalysed reaction is (2E)-4-hydroxy-3-methylbut-2-enyl diphosphate + oxidized [flavodoxin] + H2O + 2 H(+) = 2-C-methyl-D-erythritol 2,4-cyclic diphosphate + reduced [flavodoxin]. Its pathway is isoprenoid biosynthesis; isopentenyl diphosphate biosynthesis via DXP pathway; isopentenyl diphosphate from 1-deoxy-D-xylulose 5-phosphate: step 5/6. In terms of biological role, converts 2C-methyl-D-erythritol 2,4-cyclodiphosphate (ME-2,4cPP) into 1-hydroxy-2-methyl-2-(E)-butenyl 4-diphosphate. This Mycobacterium bovis (strain ATCC BAA-935 / AF2122/97) protein is 4-hydroxy-3-methylbut-2-en-1-yl diphosphate synthase (flavodoxin).